A 455-amino-acid chain; its full sequence is Putative O-acetyltransferase SAT14 (455 aa).

Belongs to the lysine N-acyltransferase MbtK family.

It functions in the pathway mycotoxin biosynthesis. Putative O-acetyltransferase; part of the satratoxin SC2 cluster involved in the biosynthesis of satratoxins, trichothecene mycotoxins that are associated with human food poisonings. Satratoxins are suggested to be made by products of multiple gene clusters (SC1, SC2 and SC3) that encode 21 proteins in all, including polyketide synthases, acetyltransferases, and other enzymes expected to modify the trichothecene skeleton. SC1 encodes 10 proteins, SAT1 to SAT10. The largest are SAT8, which encodes a putative polyketide synthase (PKS) with a conventional non-reducing architecture, and SAT10, a putative protein containing four ankyrin repeats and thus may be involved in protein scaffolding. The putative short-chain reductase SAT3 may assist the PKS in some capacity. SAT6 contains a secretory lipase domain and acts probably as a trichothecene esterase. SAT5 encodes a putative acetyltransferase, and so, with SAT6, may affect endogenous protection from toxicity. The probable transcription factor SAT9 may regulate the expression of the SC1 cluster. SC2 encodes proteins SAT11 to SAT16, the largest of which encodes the putative reducing PKS SAT13. SAT11 is a cytochrome P450 monooxygenase, while SAT14 and SAT16 are probable acetyltransferases. The SC2 cluster may be regulated by the transcription factor SAT15. SC3 is a small cluster that encodes 5 proteins, SAT17 to SAT21. SAT21 is a putative MFS-type transporter which may have a role in exporting secondary metabolites. The four other proteins putatively encoded in SC3 include the taurine hydroxylase-like protein SAT17, the O-methyltransferase SAT18, the acetyltransferase SAT19, and the Cys6-type zinc finger SAT20, the latter being probably involved in regulation of SC3 expression. The sequence is that of Putative O-acetyltransferase SAT14 from Stachybotrys chartarum (strain CBS 109288 / IBT 7711) (Toxic black mold).